The chain runs to 332 residues: Geranylgeranyl pyrophosphate synthase 2 (332 aa).

Residues Lys55, Arg58, and His87 each coordinate isopentenyl diphosphate. Residues Asp94 and Asp98 each contribute to the Mg(2+) site. Arg103 contacts dimethylallyl diphosphate. Residue Arg104 coordinates isopentenyl diphosphate. The dimethylallyl diphosphate site is built by Lys181, Thr182, and Gln218. Position 221 (Asp221) interacts with Mg(2+). Residues Asn225, Lys235, and Lys245 each contribute to the dimethylallyl diphosphate site.

It belongs to the FPP/GGPP synthase family. Mg(2+) is required as a cofactor.

The catalysed reaction is isopentenyl diphosphate + dimethylallyl diphosphate = (2E)-geranyl diphosphate + diphosphate. The enzyme catalyses isopentenyl diphosphate + (2E)-geranyl diphosphate = (2E,6E)-farnesyl diphosphate + diphosphate. It catalyses the reaction isopentenyl diphosphate + (2E,6E)-farnesyl diphosphate = (2E,6E,10E)-geranylgeranyl diphosphate + diphosphate. Functionally, geranylgeranyl pyrophosphate synthase; part of the gene cluster 3 that mediates the biosynthesis of an isoprenoid secondary metabolite. The chain is Geranylgeranyl pyrophosphate synthase 2 (GGS2) from Zymoseptoria tritici (strain CBS 115943 / IPO323) (Speckled leaf blotch fungus).